The primary structure comprises 61 residues: uncharacterized protein (61 aa).

This is an uncharacterized protein from Bacillus subtilis (strain 168).